The sequence spans 211 residues: Uridine kinase (211 aa).

Residue Gly-15–Thr-22 participates in ATP binding.

Belongs to the uridine kinase family.

Its subcellular location is the cytoplasm. The enzyme catalyses uridine + ATP = UMP + ADP + H(+). The catalysed reaction is cytidine + ATP = CMP + ADP + H(+). The protein operates within pyrimidine metabolism; CTP biosynthesis via salvage pathway; CTP from cytidine: step 1/3. Its pathway is pyrimidine metabolism; UMP biosynthesis via salvage pathway; UMP from uridine: step 1/1. This chain is Uridine kinase, found in Latilactobacillus sakei subsp. sakei (strain 23K) (Lactobacillus sakei subsp. sakei).